A 314-amino-acid polypeptide reads, in one-letter code: Ribonuclease Z (314 aa).

Positions 61, 63, 65, 66, 139, 211, and 269 each coordinate Zn(2+). Asp65 (proton acceptor) is an active-site residue.

This sequence belongs to the RNase Z family. Homodimer. Zn(2+) serves as cofactor.

It catalyses the reaction Endonucleolytic cleavage of RNA, removing extra 3' nucleotides from tRNA precursor, generating 3' termini of tRNAs. A 3'-hydroxy group is left at the tRNA terminus and a 5'-phosphoryl group is left at the trailer molecule.. Functionally, zinc phosphodiesterase, which displays some tRNA 3'-processing endonuclease activity. Probably involved in tRNA maturation, by removing a 3'-trailer from precursor tRNA. The protein is Ribonuclease Z of Gemmatimonas aurantiaca (strain DSM 14586 / JCM 11422 / NBRC 100505 / T-27).